Consider the following 434-residue polypeptide: ATP-dependent RNA helicase RhlB (434 aa).

The Q motif motif lies at 9–37; sequence KKFADFPLKPEILAALNENGFEFCTPIQA. Residues 40 to 219 enclose the Helicase ATP-binding domain; that stretch reads LPILLNAKDI…YDHMNDPEKV (180 aa). 53-60 contacts ATP; it reads AQTGTGKT. The short motif at 165–168 is the DEAD box element; the sequence is DEAD. The Helicase C-terminal domain maps to 243 to 390; the sequence is KMRLLLSLIE…VSNYDKDALL (148 aa). The tract at residues 390–434 is disordered; the sequence is LDDIPPPARIHRKPPTSRTRDGGSKGAHRSGGNTSRPPRHRTRRP.

Belongs to the DEAD box helicase family. RhlB subfamily. As to quaternary structure, component of the RNA degradosome, which is a multiprotein complex involved in RNA processing and mRNA degradation.

The protein localises to the cytoplasm. It carries out the reaction ATP + H2O = ADP + phosphate + H(+). DEAD-box RNA helicase involved in RNA degradation. Has RNA-dependent ATPase activity and unwinds double-stranded RNA. This Shewanella frigidimarina (strain NCIMB 400) protein is ATP-dependent RNA helicase RhlB.